The sequence spans 22 residues: Phospholipase A2 (22 aa).

Belongs to the phospholipase A2 family. Group II subfamily. Ca(2+) is required as a cofactor. In terms of processing, seven disulfide bonds are present. Expressed by the venom gland.

The protein resides in the secreted. It catalyses the reaction a 1,2-diacyl-sn-glycero-3-phosphocholine + H2O = a 1-acyl-sn-glycero-3-phosphocholine + a fatty acid + H(+). Functionally, snake venom phospholipase A2 (PLA2) that inhibits neuromuscular transmission by blocking acetylcholine release from the nerve termini. PLA2 catalyzes the calcium-dependent hydrolysis of the 2-acyl groups in 3-sn-phosphoglycerides. This is Phospholipase A2 from Daboia siamensis (Eastern Russel's viper).